The following is a 348-amino-acid chain: 4-hydroxy-3-methylbut-2-en-1-yl diphosphate synthase (flavodoxin) (348 aa).

Residues Cys263, Cys266, Cys298, and Glu305 each coordinate [4Fe-4S] cluster.

It belongs to the IspG family. Requires [4Fe-4S] cluster as cofactor.

It carries out the reaction (2E)-4-hydroxy-3-methylbut-2-enyl diphosphate + oxidized [flavodoxin] + H2O + 2 H(+) = 2-C-methyl-D-erythritol 2,4-cyclic diphosphate + reduced [flavodoxin]. It functions in the pathway isoprenoid biosynthesis; isopentenyl diphosphate biosynthesis via DXP pathway; isopentenyl diphosphate from 1-deoxy-D-xylulose 5-phosphate: step 5/6. Functionally, converts 2C-methyl-D-erythritol 2,4-cyclodiphosphate (ME-2,4cPP) into 1-hydroxy-2-methyl-2-(E)-butenyl 4-diphosphate. In Dehalococcoides mccartyi (strain ATCC BAA-2100 / JCM 16839 / KCTC 5957 / BAV1), this protein is 4-hydroxy-3-methylbut-2-en-1-yl diphosphate synthase (flavodoxin).